The primary structure comprises 993 residues: Testis-expressed protein 13C (993 aa).

Disordered regions lie at residues 281 to 381, 520 to 547, and 894 to 959; these read QEET…SLKK, DSKS…SHSL, and FSKS…PVNW. The segment covering 325–335 has biased composition (polar residues); sequence GMTSQGDSSSH. The span at 353–364 shows a compositional bias: basic and acidic residues; sequence SRSHSLEKKPVM. A compositionally biased stretch (polar residues) spans 944-957; sequence ESQQQKPASCSSPV. The RanBP2-type zinc finger occupies 955-984; the sequence is SPVNWACPWCNAMNFPRNKVCSKCKRVRMP.

Belongs to the TEX13 family.

This is Testis-expressed protein 13C from Homo sapiens (Human).